The chain runs to 372 residues: Adaptive-response sensory kinase SasA (372 aa).

Residues 147–360 enclose the Histidine kinase domain; the sequence is MVAHELRTPL…CFHFTVPVWQ (214 aa). His-150 carries the post-translational modification Phosphohistidine; by autocatalysis.

Homooligomerizes. Interacts with KaiC. Participates in the KaiBC complex, whose core is composed of a KaiC homohexamer and 6 KaiB.

The catalysed reaction is ATP + protein L-histidine = ADP + protein N-phospho-L-histidine.. Functionally, member of the two-component regulatory system SasA/RpaA involved in genome-wide circadian gene expression. One of several clock output pathways. Participates in the Kai clock protein complex, the main circadian regulator in cyanobacteria, via its interaction with KaiC. KaiC enhances the autophosphorylation activity of SasA, which then transfers its phosphate group to RpaA to activate it. In addition to its output function, recruits fold-shifted KaiB (KaiB(fs)) to KaiC to cooperatively form the KaiB(6):KaiC(6) complex (independent of SasA kinase activity). Required for robustness of the circadian rhythm of gene expression and is involved in clock output, also required for adaptation to light/dark cycles. The protein is Adaptive-response sensory kinase SasA of Prochlorococcus marinus (strain MIT 9215).